We begin with the raw amino-acid sequence, 1112 residues long: Plasma membrane calcium-transporting ATPase 2 (1112 aa).

At Met-1–Thr-94 the chain is on the cytoplasmic side. Residues Phe-95 to Ala-115 traverse the membrane as a helical segment. Topologically, residues Leu-116–Trp-152 are extracellular. A helical transmembrane segment spans residues Ile-153–Asp-173. Over Trp-174–Leu-373 the chain is Cytoplasmic. The segment covering Glu-298–His-311 has biased composition (basic and acidic residues). The segment at Glu-298–Lys-363 is disordered. A compositionally biased stretch (polar residues) spans Gln-312–Ile-327. Over residues Ala-351 to Lys-363 the composition is skewed to basic and acidic residues. Residues Thr-374–Ile-393 traverse the membrane as a helical segment. Residues Ile-394–Phe-426 are Extracellular-facing. The helical transmembrane segment at Phe-427–Leu-444 threads the bilayer. The Cytoplasmic segment spans residues Ala-445 to Ile-858. Catalysis depends on Asp-482, which acts as the 4-aspartylphosphate intermediate. Mg(2+) is bound by residues Asp-803 and Asp-807. Residues Ser-859–Thr-878 form a helical membrane-spanning segment. Topologically, residues Gly-879 to Leu-888 are extracellular. Residues Lys-889–Ala-909 form a helical membrane-spanning segment. Over Thr-910 to Leu-929 the chain is Cytoplasmic. A helical transmembrane segment spans residues Ile-930–Leu-952. The Extracellular segment spans residues Leu-953–Leu-970. The helical transmembrane segment at His-971–Asn-992 threads the bilayer. The Cytoplasmic segment spans residues Glu-993 to Arg-1011. The helical transmembrane segment at Asn-1012 to Gly-1033 threads the bilayer. Over Gly-1034–Asp-1043 the chain is Extracellular. Residues Leu-1044–Ala-1065 form a helical membrane-spanning segment. The Cytoplasmic portion of the chain corresponds to Thr-1066–Leu-1112. Residues Glu-1086–Leu-1112 form a disordered region. Positions Leu-1087 to Glu-1098 are enriched in acidic residues. Positions Ile-1099 to Leu-1112 are enriched in basic and acidic residues. Residues Leu-1106 to Leu-1112 are calmodulin-binding subdomain A.

This sequence belongs to the cation transport ATPase (P-type) (TC 3.A.3) family. Type IIB subfamily.

The protein localises to the cell membrane. It carries out the reaction Ca(2+)(in) + ATP + H2O = Ca(2+)(out) + ADP + phosphate + H(+). Functionally, this magnesium-dependent enzyme catalyzes the hydrolysis of ATP coupled with the transport of calcium out of the cell. This chain is Plasma membrane calcium-transporting ATPase 2 (atp2b2), found in Oreochromis mossambicus (Mozambique tilapia).